The sequence spans 190 residues: RNA-binding protein OPG065 (190 aa).

The Z-binding domain occupies 5-70 (YIDERSNAEI…DIPPRWFMTT (66 aa)). The 68-residue stretch at 117 to 184 (NPVTVINEYC…AKLAVDKLLG (68 aa)) folds into the DRBM domain.

Belongs to the orthopoxvirus OPG065 family. Interacts with host G1P2/ISG15. Interacts with host EIF2AK2/PKR. Interacts with host ZBP1.

In terms of biological role, RNA-binding protein that plays a role in the inhibition of multiple cellular antiviral responses activated by double-stranded RNA (dsRNA), such as inhibition of PKR activation, necroptosis, and IFN-mediated antiviral activities. Recognizes and binds Z-RNA structures via its Z-binding domain and dsRNA via its DRBM domain: RNA-binding activity is required to escape host ZBP1-dependent necroptosis. Mechanistically, the Z-binding domain binds Z-RNAs that are produced during vaccinia virus infection, thereby competing with Z-RNA detection by host ZBP1, suppressing ZBP1-dependent necroptosis. Acts as a key inhibitor of the interferon response by blocking the phosphorylation and subsequent activation of IRF3 and IRF7 kinases that are required for interferon-alpha gene expression. Inhibits NF-kappa-B activation and the ubiquitin-like protein ISG15, which is an early antiviral protein. The binding with host ISG15 subsequently blocks host ISGylation. The sequence is that of RNA-binding protein OPG065 (OPG065) from Vaccinia virus (strain Western Reserve) (VACV).